The primary structure comprises 679 residues: MPLHPPARRPHGHRRNGSEAQTEATTQDTGRLSCPRRVGAAVCPIQGLGHRAARRPRRGVGTTSASRAPRPGALMPATRNRPRFIHYRVQPPRTHVSFKRPKRSRTHQSHTKVPGWTHEKRMGSSVEEGLRPELSQLEQDADNLGEEEAARLPVTSLNGLLMEGDRHPNPGQGPFFYIGGTNGASIISNYCESKGWQRTQDSRCEDYKLKWCEIKCRDNYCSFREGQQLLFQLPNNKLLTTKIGLLSALREHARTLSKARLMPSTQAKVLKMDEFFPETYRLDIRDERQAFFTLFDETQMWICKPTASNQGKGIFLIRSQEEAAALQAKTQSIEDDPIYRKMPFRAPQARVVQRYVQNPLLLDGKKFDVRSYMLIACAMPYMVFFGHGYARLTLSLYNPHSSDLSGHLTNQFMQKKSPLYMLLKDSTVWSMEHLNRYINDKFRKSKGLPRDWVFTTFTKRMQQIMSHCFLAVKSKLECKLGYFDLIGCDFLIDENFKVWLLEMNSNPALHTNCEVLKEVIPGVVMETLDLALETCQKSLHSQKMLPLQSQRRFVLLYNGETTDLWPRLGSSRPPIRLPYANSNHARSTCEISSSSLTSTRVTIADRPAARKSMSSRTAPICASRKSRLSDSGGVSIEESETSVCSGLPEGSRDAAREPSLGPTEEEREEEQRSTSHRGS.

A compositionally biased stretch (basic residues) spans 1–15; sequence MPLHPPARRPHGHRR. Disordered regions lie at residues 1-33, 49-77, and 96-124; these read MPLH…GRLS, GHRA…LMPA, and VSFK…RMGS. A compositionally biased stretch (polar residues) spans 18–30; the sequence is SEAQTEATTQDTG. Over residues 96-110 the composition is skewed to basic residues; it reads VSFKRPKRSRTHQSH. Residues 172–543 form the TTL domain; it reads QGPFFYIGGT…TCQKSLHSQK (372 aa). Residues lysine 304, 310-311, 353-356, 366-368, and 409-410 each bind ATP; these read QG, QRYV, KFD, and TN. Glutamine 310 contacts a protein. Mg(2+)-binding residues include aspartate 489, glutamate 502, and asparagine 504. A disordered region spans residues 605 to 679; that stretch reads DRPAARKSMS…EQRSTSHRGS (75 aa).

It depends on Mg(2+) as a cofactor.

Its subcellular location is the cytoplasm. It localises to the cytoskeleton. The protein resides in the cell projection. The protein localises to the cilium. It is found in the cilium axoneme. The catalysed reaction is (glycyl)(n)-glycyl-L-glutamyl-[protein] + glycine + ATP = (glycyl)(n+1)-glycyl-L-glutamyl-[protein] + ADP + phosphate + H(+). Its function is as follows. Polyglycylase which modifies both tubulin and non-tubulin proteins, generating polyglycine side chains of variable lengths on the gamma-carboxyl groups of specific glutamate residues of target proteins. Involved in the elongation step rather than the initiation step of the polyglycylation reaction. Polyglycylates alpha-tubulin and beta-tubulin. Polyglycylates non-tubulin proteins such as nucleosome assembly protein NAP1. The sequence is that of Protein polyglycylase TTLL10 from Rattus norvegicus (Rat).